The primary structure comprises 210 residues: ATP phosphoribosyltransferase (210 aa).

Belongs to the ATP phosphoribosyltransferase family. Short subfamily. Heteromultimer composed of HisG and HisZ subunits.

Its subcellular location is the cytoplasm. It catalyses the reaction 1-(5-phospho-beta-D-ribosyl)-ATP + diphosphate = 5-phospho-alpha-D-ribose 1-diphosphate + ATP. Its pathway is amino-acid biosynthesis; L-histidine biosynthesis; L-histidine from 5-phospho-alpha-D-ribose 1-diphosphate: step 1/9. Catalyzes the condensation of ATP and 5-phosphoribose 1-diphosphate to form N'-(5'-phosphoribosyl)-ATP (PR-ATP). Has a crucial role in the pathway because the rate of histidine biosynthesis seems to be controlled primarily by regulation of HisG enzymatic activity. The polypeptide is ATP phosphoribosyltransferase (hisG) (Synechocystis sp. (strain ATCC 27184 / PCC 6803 / Kazusa)).